A 499-amino-acid polypeptide reads, in one-letter code: Thioredoxin reductase 1, cytoplasmic (499 aa).

Residues 22–23 (SG), 42–43 (DF), 58–59 (TC), and 63–67 (GCIPK) contribute to the FAD site. C59 and C64 are joined by a disulfide. An N6-succinyllysine modification is found at K68. Y131 bears the Phosphotyrosine mark. Residues 131–132 (YG) and T161 contribute to the FAD site. NADP(+)-binding positions include R166, 198 to 204 (ASYVALE), 221 to 222 (RS), R226, 226 to 228 (RGF), 292 to 293 (GR), and K315. Y200 contributes to the FAD binding site. FAD contacts are provided by residues D334, 341–343 (ELT), and H472. E341 is a binding site for NADP(+). H472 functions as the Proton acceptor in the catalytic mechanism. The segment at residues 497–498 (CU) is a cross-link (cysteinyl-selenocysteine (Cys-Sec)). A non-standard amino acid (selenocysteine) is located at residue U498.

Belongs to the class-I pyridine nucleotide-disulfide oxidoreductase family. In terms of assembly, homodimer. It depends on FAD as a cofactor. In terms of processing, ISGylated.

Its subcellular location is the cytoplasm. It catalyses the reaction [thioredoxin]-dithiol + NADP(+) = [thioredoxin]-disulfide + NADPH + H(+). It carries out the reaction H2O2 + NADPH + H(+) = NADP(+) + 2 H2O. Reduces disulfideprotein thioredoxin (Trx) to its dithiol-containing form. Homodimeric flavoprotein involved in the regulation of cellular redox reactions, growth and differentiation. Contains a selenocysteine residue at the C-terminal active site that is essential for catalysis. Also has reductase activity on hydrogen peroxide (H2O2). This Bos taurus (Bovine) protein is Thioredoxin reductase 1, cytoplasmic (TXNRD1).